Reading from the N-terminus, the 393-residue chain is Probable acetyl-CoA acyltransferase (393 aa).

Residue Cys88 is the Acyl-thioester intermediate of the active site. Catalysis depends on proton acceptor residues His349 and Cys378.

The protein belongs to the thiolase-like superfamily. Thiolase family.

It is found in the cytoplasm. The catalysed reaction is 2 acetyl-CoA = acetoacetyl-CoA + CoA. In Staphylococcus aureus (strain bovine RF122 / ET3-1), this protein is Probable acetyl-CoA acyltransferase.